Consider the following 201-residue polypeptide: Alpha-1-acid glycoprotein (201 aa).

A signal peptide spans 1–18; sequence MALPWALAVLSLLPLLHA. N-linked (GlcNAc...) asparagine glycosylation is found at Asn-25, Asn-33, Asn-87, Asn-93, Asn-103, and Asn-169. The cysteines at positions 90 and 183 are disulfide-linked.

The protein belongs to the calycin superfamily. Lipocalin family.

Its subcellular location is the secreted. In terms of biological role, functions as a transport protein in the blood stream. Binds various ligands in the interior of its beta-barrel domain. Appears to function in modulating the activity of the immune system during the acute-phase reaction. This is Alpha-1-acid glycoprotein (ORM1) from Oryctolagus cuniculus (Rabbit).